The primary structure comprises 123 residues: Putative membrane protein insertion efficiency factor (123 aa).

Residues 1-23 (MGSCGGKHTGKGAPKPYSRNFTD) are disordered.

This sequence belongs to the UPF0161 family.

It localises to the cell inner membrane. In terms of biological role, could be involved in insertion of integral membrane proteins into the membrane. This is Putative membrane protein insertion efficiency factor from Brucella ovis (strain ATCC 25840 / 63/290 / NCTC 10512).